Reading from the N-terminus, the 186-residue chain is Elongation factor P (186 aa).

The protein belongs to the elongation factor P family.

Its subcellular location is the cytoplasm. Its pathway is protein biosynthesis; polypeptide chain elongation. Its function is as follows. Involved in peptide bond synthesis. Stimulates efficient translation and peptide-bond synthesis on native or reconstituted 70S ribosomes in vitro. Probably functions indirectly by altering the affinity of the ribosome for aminoacyl-tRNA, thus increasing their reactivity as acceptors for peptidyl transferase. In Cupriavidus pinatubonensis (strain JMP 134 / LMG 1197) (Cupriavidus necator (strain JMP 134)), this protein is Elongation factor P.